A 226-amino-acid polypeptide reads, in one-letter code: MTAPLTLLIVEDETPLAEMHAEYIRHIPGFSQILLAGNLAQARMMIERFKPGLILLDNYLPDGRGINLLHELVQAHYPGDVVFTTAASDMETVSEAVRCGVFDYLIKPIAYERLGQTLTRFRQRKHMLESIDSASQKQIDEMFNAYARGEPKDELPTGIDPLTLNAVRKLFKEPGVQHTAETVAQALTISRTTARRYLEYCASRHLIIAEIVHGKVGRPQRIYHSG.

In terms of domain architecture, Response regulatory spans 6-122 (TLLIVEDETP…RLGQTLTRFR (117 aa)). At aspartate 57 the chain carries 4-aspartylphosphate. Positions 180–199 (AETVAQALTISRTTARRYLE) form a DNA-binding region, H-T-H motif.

Post-translationally, phosphorylated and activated by DpiB.

The protein localises to the cytoplasm. In terms of biological role, member of the two-component regulatory system DpiA/DpiB, which is essential for expression of citrate-specific fermentation genes and genes involved in plasmid inheritance. Could be involved in response to both the presence of citrate and external redox conditions. The sequence is that of Transcriptional regulatory protein DpiA (dpiA) from Escherichia coli O157:H7.